The sequence spans 1370 residues: DNA-directed RNA polymerase subunit beta (1370 aa).

It belongs to the RNA polymerase beta chain family. In terms of assembly, the RNAP catalytic core consists of 2 alpha, 1 beta, 1 beta' and 1 omega subunit. When a sigma factor is associated with the core the holoenzyme is formed, which can initiate transcription.

The catalysed reaction is RNA(n) + a ribonucleoside 5'-triphosphate = RNA(n+1) + diphosphate. Functionally, DNA-dependent RNA polymerase catalyzes the transcription of DNA into RNA using the four ribonucleoside triphosphates as substrates. The protein is DNA-directed RNA polymerase subunit beta of Bordetella pertussis (strain Tohama I / ATCC BAA-589 / NCTC 13251).